The primary structure comprises 270 residues: Putative pyruvate, phosphate dikinase regulatory protein (270 aa).

148–155 (GISRTSKT) contributes to the ADP binding site.

This sequence belongs to the pyruvate, phosphate/water dikinase regulatory protein family. PDRP subfamily.

It carries out the reaction N(tele)-phospho-L-histidyl/L-threonyl-[pyruvate, phosphate dikinase] + ADP = N(tele)-phospho-L-histidyl/O-phospho-L-threonyl-[pyruvate, phosphate dikinase] + AMP + H(+). It catalyses the reaction N(tele)-phospho-L-histidyl/O-phospho-L-threonyl-[pyruvate, phosphate dikinase] + phosphate + H(+) = N(tele)-phospho-L-histidyl/L-threonyl-[pyruvate, phosphate dikinase] + diphosphate. Bifunctional serine/threonine kinase and phosphorylase involved in the regulation of the pyruvate, phosphate dikinase (PPDK) by catalyzing its phosphorylation/dephosphorylation. This Bacillus mycoides (strain KBAB4) (Bacillus weihenstephanensis) protein is Putative pyruvate, phosphate dikinase regulatory protein.